Here is a 392-residue protein sequence, read N- to C-terminus: Mycofactocin maturase MftC (392 aa).

In terms of domain architecture, Radical SAM core spans 18 to 228 (LDAPICLTWE…YDWLVAKGDR (211 aa)). Positions 32, 36, 39, 253, 260, 271, 312, 315, 321, 325, and 343 each coordinate [4Fe-4S] cluster. A compositionally biased stretch (basic and acidic residues) spans 354–367 (KERVKPKPSGDHSR). Residues 354–377 (KERVKPKPSGDHSRGTKQGPVALK) form a disordered region.

This sequence belongs to the radical SAM superfamily. MftC family. The cofactor is [4Fe-4S] cluster.

It catalyses the reaction [mycofactocin precursor peptide]-C-terminal glycyl-L-valyl-L-tyrosine + S-adenosyl-L-methionine = [mycofactocin precursor peptide]-C-terminal glycyl-N-{[2-(4-hydroxyphenyl)ethenyl]-3-methylbutanamide} + 5'-deoxyadenosine + L-methionine + CO2. It carries out the reaction [mycofactocin precursor peptide]-C-terminal glycyl-N-{[2-(4-hydroxyphenyl)ethenyl]-3-methylbutanamide} + AH2 + S-adenosyl-L-methionine = [mycofactocin precursor peptide]-C-terminal glycyl-N-{5-[(4-hydroxyphenyl)methyl]-4,4-dimethyl-2-oxopyrrolidin-3-yl}acetamide + 5'-deoxyadenosine + L-methionine + A + H(+). Functionally, radical S-adenosylmethionine (SAM) enzyme responsible for the first step of the biosynthesis of the enzyme cofactor mycofactocin (MFT). Catalyzes two reactions at the C-terminus of the mycofactocin precursor (the MftA peptide). The first one is the oxidative decarboxylation of the C-terminal L-tyrosine of MftA, forming an unsaturated tyramine moiety. The second reaction is the cross-linking of the tyramine with the penultimate L-valine residue, forming a five-membered lactam ring. Its activity requires the presence of the MftB chaperone. Is required for the in vivo ethanol assimilation in M.smegmatis. The protein is Mycofactocin maturase MftC of Mycolicibacterium smegmatis (strain ATCC 700084 / mc(2)155) (Mycobacterium smegmatis).